We begin with the raw amino-acid sequence, 338 residues long: Nicotinate-nucleotide--dimethylbenzimidazole phosphoribosyltransferase (338 aa).

E306 acts as the Proton acceptor in catalysis.

It belongs to the CobT family.

The enzyme catalyses 5,6-dimethylbenzimidazole + nicotinate beta-D-ribonucleotide = alpha-ribazole 5'-phosphate + nicotinate + H(+). Its pathway is nucleoside biosynthesis; alpha-ribazole biosynthesis; alpha-ribazole from 5,6-dimethylbenzimidazole: step 1/2. Catalyzes the synthesis of alpha-ribazole-5'-phosphate from nicotinate mononucleotide (NAMN) and 5,6-dimethylbenzimidazole (DMB). This is Nicotinate-nucleotide--dimethylbenzimidazole phosphoribosyltransferase from Cereibacter sphaeroides (strain ATCC 17025 / ATH 2.4.3) (Rhodobacter sphaeroides).